A 254-amino-acid chain; its full sequence is 4-hydroxy-tetrahydrodipicolinate reductase (254 aa).

7 to 12 provides a ligand contact to NAD(+); the sequence is GASGRI. Arginine 35 is a binding site for NADP(+). Residues 91–93 and 115–118 contribute to the NAD(+) site; these read GTT and AHNM. Histidine 147 (proton donor/acceptor) is an active-site residue. Histidine 148 contacts (S)-2,3,4,5-tetrahydrodipicolinate. Lysine 151 serves as the catalytic Proton donor. 157–158 serves as a coordination point for (S)-2,3,4,5-tetrahydrodipicolinate; sequence GT.

The protein belongs to the DapB family.

Its subcellular location is the cytoplasm. It catalyses the reaction (S)-2,3,4,5-tetrahydrodipicolinate + NAD(+) + H2O = (2S,4S)-4-hydroxy-2,3,4,5-tetrahydrodipicolinate + NADH + H(+). It carries out the reaction (S)-2,3,4,5-tetrahydrodipicolinate + NADP(+) + H2O = (2S,4S)-4-hydroxy-2,3,4,5-tetrahydrodipicolinate + NADPH + H(+). Its pathway is amino-acid biosynthesis; L-lysine biosynthesis via DAP pathway; (S)-tetrahydrodipicolinate from L-aspartate: step 4/4. Catalyzes the conversion of 4-hydroxy-tetrahydrodipicolinate (HTPA) to tetrahydrodipicolinate. This Helicobacter acinonychis (strain Sheeba) protein is 4-hydroxy-tetrahydrodipicolinate reductase.